A 349-amino-acid chain; its full sequence is Protein RecA (349 aa).

65–72 (GPESSGKT) lines the ATP pocket. The disordered stretch occupies residues 329–349 (KASDQTAAHDETEEEPDLLES). Residues 339-349 (ETEEEPDLLES) show a composition bias toward acidic residues.

Belongs to the RecA family.

It is found in the cytoplasm. Its function is as follows. Can catalyze the hydrolysis of ATP in the presence of single-stranded DNA, the ATP-dependent uptake of single-stranded DNA by duplex DNA, and the ATP-dependent hybridization of homologous single-stranded DNAs. It interacts with LexA causing its activation and leading to its autocatalytic cleavage. This is Protein RecA from Acinetobacter baylyi (strain ATCC 33305 / BD413 / ADP1).